The sequence spans 137 residues: Phosphomevalonate dehydratase small subunit (137 aa).

Serine 65 functions as the Proton acceptor in the catalytic mechanism.

This sequence belongs to the AcnX type II small subunit family. Heterodimer composed of a large subunit (PMDh-L) and a small subunit (PMDh-S).

The enzyme catalyses (R)-5-phosphomevalonate = (2E)-3-methyl-5-phosphooxypent-2-enoate + H2O. It functions in the pathway isoprenoid biosynthesis; isopentenyl diphosphate biosynthesis via mevalonate pathway. In terms of biological role, component of a hydro-lyase that catalyzes the dehydration of mevalonate 5-phosphate (MVA5P) to form trans-anhydromevalonate 5-phosphate (tAHMP). Involved in the archaeal mevalonate (MVA) pathway, which provides fundamental precursors for isoprenoid biosynthesis, such as isopentenyl diphosphate (IPP) and dimethylallyl diphosphate (DMAPP). The polypeptide is Phosphomevalonate dehydratase small subunit (Methanococcoides burtonii (strain DSM 6242 / NBRC 107633 / OCM 468 / ACE-M)).